Reading from the N-terminus, the 396-residue chain is Mannonate dehydratase (396 aa).

This sequence belongs to the mannonate dehydratase family. It depends on Fe(2+) as a cofactor. Mn(2+) serves as cofactor.

It carries out the reaction D-mannonate = 2-dehydro-3-deoxy-D-gluconate + H2O. It participates in carbohydrate metabolism; pentose and glucuronate interconversion. Its function is as follows. Catalyzes the dehydration of D-mannonate. The sequence is that of Mannonate dehydratase from Enterobacter sp. (strain 638).